Here is a 344-residue protein sequence, read N- to C-terminus: Secreted LysM effector LysM2 (344 aa).

Residues 1 to 24 form the signal peptide; the sequence is MMAPKSLQTGLLILLLAKLKLAWG. In terms of domain architecture, LysM 1 spans 36 to 80; that stretch reads YEAAASSGDTCTSFAAEWGLTEETFASLNPSAACPSLVAGQNYCM. Positions 88–134 are enriched in low complexity; it reads STTSSSSSTTSSSTTSSSTTSSSTTSSSTTTSSFTTTTASETTSTAA. The tract at residues 88–141 is disordered; that stretch reads STTSSSSSTTSSSTTSSSTTSSSTTSSSTTTSSFTTTTASETTSTAANGVTTPM. 3 consecutive LysM domains span residues 153–199, 216–262, and 296–342; these read KFDL…YVCV and KFWL…YICV.

This sequence belongs to the secreted LysM effector family.

Might have a role in sequestration of chitin oligosaccharides (breakdown products of fungal cell walls that are released during invasion and act as triggers of host immunity) to dampen host defense. The chain is Secreted LysM effector LysM2 from Penicillium expansum (Blue mold rot fungus).